Here is a 264-residue protein sequence, read N- to C-terminus: 3-methyl-2-oxobutanoate hydroxymethyltransferase (264 aa).

Residues Asp45 and Asp84 each coordinate Mg(2+). 3-methyl-2-oxobutanoate is bound by residues 45 to 46, Asp84, and Lys112; that span reads DS. A Mg(2+)-binding site is contributed by Glu114. The active-site Proton acceptor is the Glu181.

Belongs to the PanB family. As to quaternary structure, homodecamer; pentamer of dimers. Mg(2+) serves as cofactor.

The protein localises to the cytoplasm. It catalyses the reaction 3-methyl-2-oxobutanoate + (6R)-5,10-methylene-5,6,7,8-tetrahydrofolate + H2O = 2-dehydropantoate + (6S)-5,6,7,8-tetrahydrofolate. It functions in the pathway cofactor biosynthesis; (R)-pantothenate biosynthesis; (R)-pantoate from 3-methyl-2-oxobutanoate: step 1/2. Functionally, catalyzes the reversible reaction in which hydroxymethyl group from 5,10-methylenetetrahydrofolate is transferred onto alpha-ketoisovalerate to form ketopantoate. In Aliivibrio fischeri (strain MJ11) (Vibrio fischeri), this protein is 3-methyl-2-oxobutanoate hydroxymethyltransferase.